We begin with the raw amino-acid sequence, 271 residues long: Plasmanylethanolamine desaturase 1 (271 aa).

A disordered region spans residues 1-25 (MAGAEDAPGRQPELDEDETAEGRRW). Helical transmembrane passes span 48-68 (WCSVILCFSLIAHNLVHLLLL), 75-95 (PLVILGVVAGALVADFLSGLV), and 166-186 (LYPWECFVFCLTIFGTFTNQI). The Histidine box-1 motif lies at 187-191 (HKWSH). Residues 214–218 (HHRIH) carry the Histidine box-2 motif.

Belongs to the fatty acid desaturase CarF family.

The protein localises to the endoplasmic reticulum membrane. It catalyses the reaction a 1-(1,2-saturated alkyl)-2-acyl-sn-glycero-3-phosphoethanolamine + 2 Fe(II)-[cytochrome b5] + O2 + 2 H(+) = a 1-O-(1Z-alkenyl)-2-acyl-sn-glycero-3-phosphoethanolamine + 2 Fe(III)-[cytochrome b5] + 2 H2O. The catalysed reaction is a 1-O-hexadecyl-2-acyl-sn-glycero-3-phosphoethanolamine + 2 Fe(II)-[cytochrome b5] + O2 + 2 H(+) = a 1-O-(1Z-hexadecenyl)-2-acyl-sn-glycero-3-phosphoethanolamine + 2 Fe(III)-[cytochrome b5] + 2 H2O. It carries out the reaction a 1-O-octadecyl-2-acyl-sn-glycero-3-phosphoethanolamine + 2 Fe(II)-[cytochrome b5] + O2 + 2 H(+) = a 1-O-(1Z-octadecenyl)-2-acyl-sn-glycero-3-phosphoethanolamine + 2 Fe(III)-[cytochrome b5] + 2 H2O. The enzyme catalyses a 1-O-(9Z-octadecenyl)-2-acyl-sn-glycero-3-phosphoethanolamine + 2 Fe(II)-[cytochrome b5] + O2 + 2 H(+) = a 1-O-(1Z,9Z-octadecadienyl)-2-acyl-sn-glycero-3-phosphoethanolamine + 2 Fe(III)-[cytochrome b5] + 2 H2O. It functions in the pathway lipid metabolism; fatty acid metabolism. Functionally, plasmanylethanolamine desaturase involved in plasmalogen biogenesis in the endoplasmic reticulum membrane. Plasmalogens are glycerophospholipids with a hydrocarbon chain linked by a vinyl ether bond at the glycerol sn-1 position, and are involved in antioxidative and signaling mechanisms. This is Plasmanylethanolamine desaturase 1 from Mus musculus (Mouse).